Consider the following 175-residue polypeptide: Co-chaperone protein HscB homolog (175 aa).

Residues 7-79 form the J domain; sequence SHFALFNLPE…LKRARYLLSL (73 aa).

The protein belongs to the HscB family. Interacts with HscA and stimulates its ATPase activity.

Functionally, co-chaperone involved in the maturation of iron-sulfur cluster-containing proteins. Seems to help targeting proteins to be folded toward HscA. This is Co-chaperone protein HscB homolog from Paraburkholderia phymatum (strain DSM 17167 / CIP 108236 / LMG 21445 / STM815) (Burkholderia phymatum).